The sequence spans 159 residues: uncharacterized protein (159 aa).

2 consecutive transmembrane segments (helical) span residues 17 to 37 and 40 to 60; these read ALFI…TILV and LLQF…FKKY.

It localises to the cell membrane. This is an uncharacterized protein from Borreliella burgdorferi (strain ATCC 35210 / DSM 4680 / CIP 102532 / B31) (Borrelia burgdorferi).